The primary structure comprises 107 residues: Iron-binding protein IscA (107 aa).

Residues cysteine 35, cysteine 99, and cysteine 101 each contribute to the Fe cation site.

The protein belongs to the HesB/IscA family. As to quaternary structure, homodimer; may form tetramers and higher multimers. Fe cation is required as a cofactor.

Functionally, is able to transfer iron-sulfur clusters to apo-ferredoxin. Multiple cycles of [2Fe2S] cluster formation and transfer are observed, suggesting that IscA acts catalytically. Recruits intracellular free iron so as to provide iron for the assembly of transient iron-sulfur cluster in IscU in the presence of IscS, L-cysteine and the thioredoxin reductase system TrxA/TrxB. The sequence is that of Iron-binding protein IscA from Pectobacterium carotovorum subsp. carotovorum (strain PC1).